The primary structure comprises 629 residues: MAEFETTFADLGLKAPILEALNDLGYEKPSPIQAECIPHLLNGRDVLGMAQTGSGKTAAFSLPLLQNLDPELKAPQILVLAPTRELAVQVAEAMTDFSKHMRGVNVVALYGGQRYDVQLRALRQGPQIVVGTPGRLLDHLKRGTLDLSKLSGLVLDEADEMLRMGFIEDVETIMAQIPEGHQTALFSATMPEAIRRITRRFMKEPQEVRIQSSVTTRPDISQSYWTVWGMRKNEALVRFLEAEDFDAAIIFVRTKNATLEVAEALERNGYNSAALNGDMNQALREQTLERLKDGRLDILIATDVAARGLDVERISLVVNYDIPMDSESYVHRIGRTGRAGRAGRALLFVENRERRLLRNIERTMKLTIPEVELPNAELLGKRRLEKFAAKVQQQLESSDLDQYRALLSKIQPTAEGEELDLETLAAALLKMAQGERTLIVPPDAPMRPKREFRDRDDRGPRDRNDRGPRGDREDRPRRERRDVGDMQLYRIEVGRDDGVEVRHIVGAIANEGDISSRYIGNIKLFASHSTIELPKGMPGEVLQHFTRTRILNKPMNMQLLGDAQPHTGGERRGGGRGFGGERREGGRNFSGERREGGRGDGRRFSGERREGRAPRRDDSTGRRRFGGDA.

The Q motif motif lies at 6–34 (TTFADLGLKAPILEALNDLGYEKPSPIQA). In terms of domain architecture, Helicase ATP-binding spans 37–208 (IPHLLNGRDV…RRFMKEPQEV (172 aa)). Residue 50 to 57 (AQTGSGKT) coordinates ATP. Positions 156–159 (DEAD) match the DEAD box motif. In terms of domain architecture, Helicase C-terminal spans 232 to 379 (KNEALVRFLE…EVELPNAELL (148 aa)). 2 disordered regions span residues 438-481 (LIVP…RERR) and 560-629 (LGDA…GGDA). Composition is skewed to basic and acidic residues over residues 446–481 (MRPK…RERR) and 568–629 (GGER…GGDA).

The protein belongs to the DEAD box helicase family. DeaD/CsdA subfamily. As to quaternary structure, interacts with the 50S ribosomal subunit upon shifting to 15 degrees Celsius. Also found associated with the RNA degradosome at 15 degrees Celsius; binds RNase E (rne).

The protein localises to the cytoplasm. The enzyme catalyses ATP + H2O = ADP + phosphate + H(+). Functionally, DEAD-box RNA helicase involved in various cellular processes at low temperature, including ribosome biogenesis, mRNA degradation and translation initiation. Exhibits RNA-stimulated ATP hydrolysis and RNA unwinding activity at low temperature. Involved in 50S ribosomal subunit assembly, acting after SrmB, and could also play a role in the biogenesis of the 30S ribosomal subunit. In addition, is involved in mRNA decay, via formation of a cold-shock degradosome with RNase E. Also stimulates translation of some mRNAs, probably at the level of initiation. This Escherichia coli (strain K12) protein is ATP-dependent RNA helicase DeaD.